Here is a 305-residue protein sequence, read N- to C-terminus: UDP-3-O-acyl-N-acetylglucosamine deacetylase (305 aa).

Residues His79, His238, and Asp242 each contribute to the Zn(2+) site. His265 serves as the catalytic Proton donor.

Belongs to the LpxC family. Zn(2+) serves as cofactor.

It carries out the reaction a UDP-3-O-[(3R)-3-hydroxyacyl]-N-acetyl-alpha-D-glucosamine + H2O = a UDP-3-O-[(3R)-3-hydroxyacyl]-alpha-D-glucosamine + acetate. The protein operates within glycolipid biosynthesis; lipid IV(A) biosynthesis; lipid IV(A) from (3R)-3-hydroxytetradecanoyl-[acyl-carrier-protein] and UDP-N-acetyl-alpha-D-glucosamine: step 2/6. Catalyzes the hydrolysis of UDP-3-O-myristoyl-N-acetylglucosamine to form UDP-3-O-myristoylglucosamine and acetate, the committed step in lipid A biosynthesis. The polypeptide is UDP-3-O-acyl-N-acetylglucosamine deacetylase (Enterobacter sp. (strain 638)).